Reading from the N-terminus, the 98-residue chain is Feather keratin 4 (98 aa).

Serine 2 is modified (N-acetylserine).

This sequence belongs to the avian keratin family. The avian keratins (F-ker, S-ker, C-ker and B-ker) are a complex mixture of very similar polypeptides.

The sequence is that of Feather keratin 4 from Gallus gallus (Chicken).